We begin with the raw amino-acid sequence, 539 residues long: Chaperone Ric-8A (539 aa).

It belongs to the synembryn family.

It localises to the cytoplasm. The protein resides in the cell cortex. Chaperone that specifically binds and folds nascent G alpha proteins prior to G protein heterotrimer formation, promoting their stability and activity: folds GNAI1, GNAO1, GNA13 and GNAQ. Does not fold G(s) G-alpha proteins GNAS nor GNAL. Also acts as a guanine nucleotide exchange factor (GEF) for G alpha proteins by stimulating exchange of bound GDP for free GTP. This is Chaperone Ric-8A (ric8a) from Xenopus tropicalis (Western clawed frog).